Here is a 1155-residue protein sequence, read N- to C-terminus: uncharacterized protein (1155 aa).

An N-terminal signal peptide occupies residues 1 to 19; it reads MKKNIFITSLLILLLLLSS. The N-palmitoyl cysteine moiety is linked to residue cysteine 20. The S-diacylglycerol cysteine moiety is linked to residue cysteine 20. The next 4 membrane-spanning stretches (helical) occupy residues 289–309, 395–415, 424–444, and 459–479; these read ISVS…FLIG, LGFI…FLIF, ALIT…FMLF, and ISYA…SMII.

The protein belongs to the TrbL/VirB6 family.

Its subcellular location is the cell membrane. This is an uncharacterized protein from Rickettsia prowazekii (strain Madrid E).